Consider the following 143-residue polypeptide: Mini-ribonuclease 3 (143 aa).

Aspartate 35 is an active-site residue.

This sequence belongs to the MrnC RNase family. Homodimer. The cofactor is Mg(2+).

The protein localises to the cytoplasm. Involved in correct processing of both the 5' and 3' ends of 23S rRNA precursor. Processes 30S rRNA precursor transcript even in absence of ribonuclease 3 (Rnc); Rnc processes 30S rRNA into smaller rRNA precursors. This chain is Mini-ribonuclease 3, found in Synechocystis sp. (strain ATCC 27184 / PCC 6803 / Kazusa).